A 1218-amino-acid polypeptide reads, in one-letter code: Protein STICHEL (1218 aa).

Residues 24-136 (AGRVLRDPGT…SDARNGGDSY (113 aa)) form a disordered region. Polar residues-rich tracts occupy residues 32–46 (GTTSSWKSPLDSSRS), 54–73 (ASRNGGSSSQFPIRGESSTN), and 86–95 (WKTQKSSSEK). Residues 163–180 (RKSNVGSCKKKSKKKISS) carry the Bipartite nuclear localization signal motif. 2 short sequence motifs (PEST) span residues 273-304 (RNPSTVGSWDGTTTSVNDGDDELDDNLDLPGR) and 425-449 (RSQDGLEAVALDGEEEEGSTPETIR). 490–497 (GPRGTGKT) is a binding site for ATP. 4 residues coordinate Zn(2+): Cys509, Cys518, Cys521, and Cys524. Positions 762-788 (EADMEGLKHALKLLSEAEKQLRVSNDR) form a coiled coil. Residues 802-828 (MPSPGTTHTGSSRRQSSRATDDDPASV) form a disordered region. Residues 804-819 (SPGTTHTGSSRRQSSR) show a composition bias toward polar residues. 2 consecutive short sequence motifs (bipartite nuclear localization signal) follow at residues 1178–1195 (RRSKSKQVKGTPVRSRRN) and 1196–1213 (RKSRFSLFNGCAKPRKAE).

It belongs to the DnaX/STICHEL family. As to quaternary structure, interacts with BLT. As to expression, ubiquitous.

Its subcellular location is the nucleus. Acts as a key regulator of trichome branching through an endoreduplication-independent pathway. This Arabidopsis thaliana (Mouse-ear cress) protein is Protein STICHEL (STI).